The following is a 698-amino-acid chain: Polyribonucleotide nucleotidyltransferase (698 aa).

Residues Asp-488 and Asp-494 each coordinate Mg(2+). The KH domain maps to 555–614; sequence PRLLTIRIDPDKIRDVIGKGGATIRALTEETGTTIDISDDGKVTIASADKAAADEARRRI. Residues 624 to 692 form the S1 motif domain; it reads GTVYEGKVSK…RQGRIRLSMK (69 aa).

Belongs to the polyribonucleotide nucleotidyltransferase family. Component of the RNA degradosome, which is a multiprotein complex involved in RNA processing and mRNA degradation. Requires Mg(2+) as cofactor.

The protein localises to the cytoplasm. The catalysed reaction is RNA(n+1) + phosphate = RNA(n) + a ribonucleoside 5'-diphosphate. Its function is as follows. Involved in mRNA degradation. Catalyzes the phosphorolysis of single-stranded polyribonucleotides processively in the 3'- to 5'-direction. The protein is Polyribonucleotide nucleotidyltransferase of Alkalilimnicola ehrlichii (strain ATCC BAA-1101 / DSM 17681 / MLHE-1).